Here is a 242-residue protein sequence, read N- to C-terminus: Mediator of RNA polymerase II transcription subunit 19-A (242 aa).

Residues 1–15 (MTEIFSTLFGQNDAQ) show a composition bias toward polar residues. 2 disordered regions span residues 1–33 (MTEI…PPPS) and 171–242 (PPKK…NSLR). Over residues 171–184 (PPKKKSKHKHRHHH) the composition is skewed to basic residues. The segment covering 193 to 210 (TRTDPTKKKKKKDNEPER) has biased composition (basic and acidic residues). Residues 211 to 223 (RKKKKDKKKKKNR) show a composition bias toward basic residues. Residues 232–242 (TGSQPNSNSLR) are compositionally biased toward polar residues.

It belongs to the Mediator complex subunit 19 family. In terms of assembly, component of the Mediator complex.

It is found in the nucleus. Its function is as follows. Component of the Mediator complex, a coactivator involved in the regulated transcription of nearly all RNA polymerase II-dependent genes. Mediator functions as a bridge to convey information from gene-specific regulatory proteins to the basal RNA polymerase II transcription machinery. Mediator is recruited to promoters by direct interactions with regulatory proteins and serves as a scaffold for the assembly of a functional preinitiation complex with RNA polymerase II and the general transcription factors. This chain is Mediator of RNA polymerase II transcription subunit 19-A (med19a), found in Danio rerio (Zebrafish).